The sequence spans 141 residues: Large ribosomal subunit protein uL11 (141 aa).

It belongs to the universal ribosomal protein uL11 family. As to quaternary structure, part of the ribosomal stalk of the 50S ribosomal subunit. Interacts with L10 and the large rRNA to form the base of the stalk. L10 forms an elongated spine to which L12 dimers bind in a sequential fashion forming a multimeric L10(L12)X complex. In terms of processing, one or more lysine residues are methylated.

Forms part of the ribosomal stalk which helps the ribosome interact with GTP-bound translation factors. The polypeptide is Large ribosomal subunit protein uL11 (Roseobacter denitrificans (strain ATCC 33942 / OCh 114) (Erythrobacter sp. (strain OCh 114))).